The chain runs to 98 residues: Integration host factor subunit alpha (98 aa).

Positions 49-71 (FGNFDLRDKNQRPGRNPKTGEDI) are disordered.

Belongs to the bacterial histone-like protein family. As to quaternary structure, heterodimer of an alpha and a beta chain.

Functionally, this protein is one of the two subunits of integration host factor, a specific DNA-binding protein that functions in genetic recombination as well as in transcriptional and translational control. This chain is Integration host factor subunit alpha, found in Shewanella sp. (strain MR-4).